The following is a 287-amino-acid chain: ATP synthase gamma chain (287 aa).

This sequence belongs to the ATPase gamma chain family. In terms of assembly, F-type ATPases have 2 components, CF(1) - the catalytic core - and CF(0) - the membrane proton channel. CF(1) has five subunits: alpha(3), beta(3), gamma(1), delta(1), epsilon(1). CF(0) has three main subunits: a, b and c.

It localises to the cell inner membrane. Produces ATP from ADP in the presence of a proton gradient across the membrane. The gamma chain is believed to be important in regulating ATPase activity and the flow of protons through the CF(0) complex. This Xanthomonas oryzae pv. oryzae (strain MAFF 311018) protein is ATP synthase gamma chain.